Reading from the N-terminus, the 290-residue chain is 4-hydroxybenzoate octaprenyltransferase (290 aa).

The next 9 helical transmembrane spans lie at 23-43 (IGTE…SDGY), 46-66 (LKMF…GCAI), 96-116 (AIWV…FLPI), 118-138 (TFYW…MKRY), 141-161 (LPQV…YTAT), 169-189 (CWLL…QYAI), 212-232 (IPII…ALYI), 235-255 (LLFP…IYQW), and 265-285 (LCFW…LAIL).

This sequence belongs to the UbiA prenyltransferase family. Mg(2+) serves as cofactor.

Its subcellular location is the cell inner membrane. It carries out the reaction all-trans-octaprenyl diphosphate + 4-hydroxybenzoate = 4-hydroxy-3-(all-trans-octaprenyl)benzoate + diphosphate. It participates in cofactor biosynthesis; ubiquinone biosynthesis. Its function is as follows. Catalyzes the prenylation of para-hydroxybenzoate (PHB) with an all-trans polyprenyl group. Mediates the second step in the final reaction sequence of ubiquinone-8 (UQ-8) biosynthesis, which is the condensation of the polyisoprenoid side chain with PHB, generating the first membrane-bound Q intermediate 3-octaprenyl-4-hydroxybenzoate. In Acinetobacter baylyi (strain ATCC 33305 / BD413 / ADP1), this protein is 4-hydroxybenzoate octaprenyltransferase.